Reading from the N-terminus, the 430-residue chain is 5-methylthioadenosine/S-adenosylhomocysteine deaminase (430 aa).

Positions 59 and 61 each coordinate Zn(2+). Substrate is bound by residues Glu88 and His181. His208 lines the Zn(2+) pocket. Residues Glu211 and Asp296 each contribute to the substrate site. Asp296 provides a ligand contact to Zn(2+).

The protein belongs to the metallo-dependent hydrolases superfamily. MTA/SAH deaminase family. Zn(2+) serves as cofactor.

The enzyme catalyses S-adenosyl-L-homocysteine + H2O + H(+) = S-inosyl-L-homocysteine + NH4(+). It carries out the reaction S-methyl-5'-thioadenosine + H2O + H(+) = S-methyl-5'-thioinosine + NH4(+). In terms of biological role, catalyzes the deamination of 5-methylthioadenosine and S-adenosyl-L-homocysteine into 5-methylthioinosine and S-inosyl-L-homocysteine, respectively. Is also able to deaminate adenosine. The sequence is that of 5-methylthioadenosine/S-adenosylhomocysteine deaminase from Aquifex aeolicus (strain VF5).